Here is a 340-residue protein sequence, read N- to C-terminus: MDRTRIVRRWRRNMDVADDAEYVEMLATLSEGSVRRNFNPYTDIDWESPEFAVTDNDPRWILPATDPLGRHPWYQAQSRERQIEIGMWRQANVAKVGLHFESILIRGLMNYTFWMPNGSPEYRYCLHESVEECNHTMMFQEMVNRVGADVPGLPRRLRWVSPLVPLVAGPLPVAFFIGVLAGEEPIDHTQKNVLREGKSLHPIMERVMSIHVAEEARHISFAHEYLRKRLPRLTRMQRFWIALYFPLTMRSLCNAIVVPPKAFWEEFDIPREVKKELFFGSPESRKWLCDMFADARMLAHDTGLMNPIARLVWRLCKIDGKPSRYRSEPQRQHLAAAPAA.

The next 2 helical transmembrane spans lie at 162 to 182 and 239 to 259; these read PLVP…VLAG and FWIA…IVVP.

Its subcellular location is the cell membrane. This is an uncharacterized protein from Mycobacterium tuberculosis (strain CDC 1551 / Oshkosh).